The primary structure comprises 336 residues: Anthranilate phosphoribosyltransferase (336 aa).

5-phospho-alpha-D-ribose 1-diphosphate-binding positions include Gly82, 85–86 (GD), Thr90, 92–95 (NIST), 110–118 (KHGNRFASG), and Ser122. Residue Gly82 participates in anthranilate binding. Ser94 is a binding site for Mg(2+). Asn113 lines the anthranilate pocket. Anthranilate is bound at residue Arg168. Residues Asp227 and Glu228 each coordinate Mg(2+).

Belongs to the anthranilate phosphoribosyltransferase family. As to quaternary structure, homodimer. Mg(2+) serves as cofactor.

It carries out the reaction N-(5-phospho-beta-D-ribosyl)anthranilate + diphosphate = 5-phospho-alpha-D-ribose 1-diphosphate + anthranilate. It functions in the pathway amino-acid biosynthesis; L-tryptophan biosynthesis; L-tryptophan from chorismate: step 2/5. Functionally, catalyzes the transfer of the phosphoribosyl group of 5-phosphorylribose-1-pyrophosphate (PRPP) to anthranilate to yield N-(5'-phosphoribosyl)-anthranilate (PRA). This is Anthranilate phosphoribosyltransferase from Desulfitobacterium hafniense (strain DSM 10664 / DCB-2).